We begin with the raw amino-acid sequence, 304 residues long: MGLAAPRKKTKISHDPNNTSWSRSTDGFGHRILKAQGWTPGDFLGARNATHSDLFTTASASHIRVVLKDDTLGLGARPKRDLLDGPTGLDAFKGLLGRLNGKSDTQLEAEQQKRDDAKLARYAATKWQTVRFISGGLLVQEKDNATASPASQDLRVDFPRETSSNEHENGMFKTEPMDSYSHQEGCATAREEEGKKKKKKNKKGKEMDMSPRKSREKKQEKIQKKRKIGDCDRLDTETADRTSTKVLVAVANDKGTSLLASNGPSTSRERQPMGRRIFRSRHIEQKKRALMDDKSLNEIFMIKT.

Positions 1–11 are enriched in basic residues; the sequence is MGLAAPRKKTK. 3 disordered regions span residues 1–25, 144–238, and 256–276; these read MGLAAPRKKTKISHDPNNTSWSRST, NATA…DTET, and TSLLASNGPSTSRERQPMGRR. The span at 15 to 25 shows a compositional bias: polar residues; sequence DPNNTSWSRST. Residues 25–79 enclose the G-patch domain; it reads TDGFGHRILKAQGWTPGDFLGARNATHSDLFTTASASHIRVVLKDDTLGLGARPK. 2 stretches are compositionally biased toward basic and acidic residues: residues 154-170 and 204-238; these read LRVDFPRETSSNEHENG and GKEMDMSPRKSREKKQEKIQKKRKIGDCDRLDTET. The segment covering 256–266 has biased composition (polar residues); it reads TSLLASNGPST.

This sequence belongs to the PINX1 family.

The protein resides in the nucleus. Its subcellular location is the nucleolus. Functionally, involved in rRNA-processing at A0, A1 and A2 sites and negatively regulates telomerase. This chain is Protein pxr1 (pxr1), found in Aspergillus fumigatus (strain ATCC MYA-4609 / CBS 101355 / FGSC A1100 / Af293) (Neosartorya fumigata).